Reading from the N-terminus, the 654-residue chain is Amyloid beta precursor like protein 1 (654 aa).

Residues 1-38 (MGPTSPAARGQGRRWRPPPLPLLLPLSLLLLRAQLAVG) form the signal peptide. The Extracellular portion of the chain corresponds to 39-584 (NLAVGSPSAA…APSGTGVSRE (546 aa)). The GFLD subdomain stretch occupies residues 50-146 (APGSAQVAGL…PFHCLPGEFV (97 aa)). An E1 domain is found at 50–212 (APGSAQVAGL…RGVEYVCCPP (163 aa)). 6 cysteine pairs are disulfide-bonded: Cys60–Cys84, Cys95–Cys140, Cys120–Cys128, Cys156–Cys210, Cys167–Cys197, and Cys181–Cys209. The segment at 154–212 (EGCRFLHQERMDQCESSTRRHQEAQEACSSQGLILHGSGMLLPCGSDRFRGVEYVCCPP) is cuBD subdomain. Residue His174 participates in Cu(2+) binding. Residues Glu206, Cys209, and Cys210 each coordinate Zn(2+). A disordered region spans residues 214-297 (ATPNPSGMAA…VTPTPRPTDG (84 aa)). Over residues 262–272 (QAEEEEEEEEE) the composition is skewed to acidic residues. In terms of domain architecture, E2 spans 297-488 (GVDVYFGMPG…QELRPQIQEL (192 aa)). Heparin-binding stretches follow at residues 314–346 (FLRA…SKNL) and 414–445 (LMAL…DPEK). The collagen-binding stretch occupies residues 446–463 (AQQMRFQVQTHLQVIEER). A glycan (N-linked (GlcNAc...) asparagine) is linked at Asn465. The interval 497–580 (SELDASVPGS…RDELAPSGTG (84 aa)) is disordered. The segment covering 508-523 (SEDKGSLQPPESKDDP) has biased composition (basic and acidic residues). The segment covering 529-539 (KGSTDQESSSS) has biased composition (polar residues). A glycan (N-linked (GlcNAc...) asparagine) is linked at Asn555. Residue His565 coordinates Cu(2+). Residue His565 coordinates Zn(2+). The helical transmembrane segment at 585-607 (ALSGLLIMGAGGGSLIVLSLLLL) threads the bilayer. The Basolateral sorting signal signature appears at 608–619 (RKKKPYGTISHG). Over 608 to 654 (RKKKPYGTISHGVVEVDPMLTLEEQQLRELQRHGYENPTYRFLEERP) the chain is Cytoplasmic. The segment at 636-652 (ELQRHGYENPTYRFLEE) is interaction with DAB1. Positions 640–654 (HGYENPTYRFLEERP) are interaction with DAB2. Residues 644 to 647 (NPTY) carry the NPXY motif; contains endocytosis signal motif.

It belongs to the APP family. As to quaternary structure, monomer and homodimer. Heparin binding promotes homodimerization. Binds, via its C-terminus, to the PID domain of several cytoplasmic proteins, including APBB and APBA family members, MAPK8IP1 and DAB1. Binding to Dab1 inhibits its serine phosphorylation. Interacts with CPEB1. Interacts (via NPXY motif) with DAB2 (via PID domain); the interaction is impaired by tyrosine phosphorylation of the NPXY motif. Interacts (via NPXY motif) with DAB1. Proteolytically cleaved by caspases during neuronal apoptosis. Cleaved, in vitro, at Asp-624 by caspase-3. In terms of processing, N- and O-glycosylated.

It is found in the cell membrane. The protein resides in the cytoplasm. May play a role in postsynaptic function. The C-terminal gamma-secretase processed fragment, ALID1, activates transcription activation through APBB1 (Fe65) binding. Couples to JIP signal transduction through C-terminal binding. May interact with cellular G-protein signaling pathways. Can regulate neurite outgrowth through binding to components of the extracellular matrix such as heparin and collagen I. In terms of biological role, the gamma-CTF peptide, C30, is a potent enhancer of neuronal apoptosis. This chain is Amyloid beta precursor like protein 1 (Aplp1), found in Mus musculus (Mouse).